A 657-amino-acid chain; its full sequence is UvrABC system protein B (657 aa).

A Helicase ATP-binding domain is found at 25-182 (NSIKSNNRAQ…KKLIEIQYER (158 aa)). 38 to 45 (GVTGSGKT) contributes to the ATP binding site. Positions 91–114 (YYDYYQPEAYVPQTDTFIEKDASI) match the Beta-hairpin motif. The region spanning 429–595 (QIDDLYGEIN…TIIKDVRDII (167 aa)) is the Helicase C-terminal domain. Positions 621–656 (DKLIKDLTEEMLLAAKNLQFERAAELRDIINEIKDG) constitute a UVR domain.

The protein belongs to the UvrB family. As to quaternary structure, forms a heterotetramer with UvrA during the search for lesions. Interacts with UvrC in an incision complex.

Its subcellular location is the cytoplasm. The UvrABC repair system catalyzes the recognition and processing of DNA lesions. A damage recognition complex composed of 2 UvrA and 2 UvrB subunits scans DNA for abnormalities. Upon binding of the UvrA(2)B(2) complex to a putative damaged site, the DNA wraps around one UvrB monomer. DNA wrap is dependent on ATP binding by UvrB and probably causes local melting of the DNA helix, facilitating insertion of UvrB beta-hairpin between the DNA strands. Then UvrB probes one DNA strand for the presence of a lesion. If a lesion is found the UvrA subunits dissociate and the UvrB-DNA preincision complex is formed. This complex is subsequently bound by UvrC and the second UvrB is released. If no lesion is found, the DNA wraps around the other UvrB subunit that will check the other stand for damage. This chain is UvrABC system protein B, found in Clostridium beijerinckii (strain ATCC 51743 / NCIMB 8052) (Clostridium acetobutylicum).